The following is a 576-amino-acid chain: Interleukin-1 receptor type 1 (576 aa).

The N-terminal stretch at 1–19 is a signal peptide; sequence MENMKVLLGLICLMVPLLS. The Extracellular segment spans residues 20-338; that stretch reads LEIDVCTEYP…QLIYPVPDFK (319 aa). Intrachain disulfides connect C25-C107, C46-C99, and C145-C199. 3 consecutive Ig-like C2-type domains span residues 25–115, 121–213, and 229–329; these read CTEY…VTVT, PGLC…YPVT, and PVIL…AHVQ. N-linked (GlcNAc...) asparagine glycosylation is found at N63, N103, N174, N236, N252, N266, and N300. C251 and C315 are oxidised to a cystine. Residues 339 to 359 form a helical membrane-spanning segment; sequence NYLIGGFIILTATIVCCVCIY. At 360–576 the chain is on the cytoplasmic side; that stretch reads KVFKVDIVLW…LPAATHLPLG (217 aa). The region spanning 386 to 541 is the TIR domain; it reads KTYDAYILYP…RFWKNLRYQM (156 aa). E473 is an active-site residue. The residue at position 499 (Y499) is a Phosphotyrosine. Position 556 is a phosphothreonine; by PKC (T556).

This sequence belongs to the interleukin-1 receptor family. The interleukin-1 receptor complex is a heterodimer of IL1R1 and IL1RAP. Interacts with PIK3R1. Interacts with IL1A. In terms of processing, a soluble form (sIL1R1) is probably produced by proteolytic cleavage at the cell surface (shedding). Rapidly phosphorylated on Tyr-499 in response to IL-1, which creates a SH2 binding site for the PI 3-kinase regulatory subunit PIK3R1. In terms of tissue distribution, isoform 2 is expressed in various brain tissues.

It is found in the membrane. Its subcellular location is the cell membrane. The protein resides in the secreted. It carries out the reaction NAD(+) + H2O = ADP-D-ribose + nicotinamide + H(+). Functionally, receptor for IL1A, IL1B and IL1RN. After binding to interleukin-1 associates with the coreceptor IL1RAP to form the high affinity interleukin-1 receptor complex which mediates interleukin-1-dependent activation of NF-kappa-B, MAPK and other pathways. Signaling involves the recruitment of adapter molecules such as TOLLIP, MYD88, and IRAK1 or IRAK2 via the respective TIR domains of the receptor/coreceptor subunits. Binds ligands with comparable affinity and binding of antagonist IL1RN prevents association with IL1RAP to form a signaling complex. Involved in IL1B-mediated costimulation of IFNG production from T-helper 1 (Th1) cells. Unable to mediate canonical IL-1 signaling. Cooperates with IL1RAP isoform 3 to mediate IL1B-induced neuronal activity including IL1B-potentiated NMDA-induced calcium influx mediated by Akt kinase activation. The chain is Interleukin-1 receptor type 1 (Il1r1) from Mus musculus (Mouse).